Reading from the N-terminus, the 61-residue chain is Small ribosomal subunit protein uS14 (61 aa).

Zn(2+)-binding residues include Cys24, Cys27, Cys40, and Cys43.

This sequence belongs to the universal ribosomal protein uS14 family. Zinc-binding uS14 subfamily. Part of the 30S ribosomal subunit. Contacts proteins S3 and S10. Zn(2+) is required as a cofactor.

In terms of biological role, binds 16S rRNA, required for the assembly of 30S particles and may also be responsible for determining the conformation of the 16S rRNA at the A site. The chain is Small ribosomal subunit protein uS14 from Dictyoglomus thermophilum (strain ATCC 35947 / DSM 3960 / H-6-12).